Here is a 504-residue protein sequence, read N- to C-terminus: Maturase K (504 aa).

This sequence belongs to the intron maturase 2 family. MatK subfamily.

It is found in the plastid. The protein resides in the chloroplast. Usually encoded in the trnK tRNA gene intron. Probably assists in splicing its own and other chloroplast group II introns. The sequence is that of Maturase K from Erythrina crista-galli (Cockspur coral tree).